A 217-amino-acid polypeptide reads, in one-letter code: Cytidylate kinase (217 aa).

9–17 is an ATP binding site; that stretch reads GPSSSGKSS.

Belongs to the cytidylate kinase family. Type 1 subfamily.

The protein resides in the cytoplasm. The enzyme catalyses CMP + ATP = CDP + ADP. The catalysed reaction is dCMP + ATP = dCDP + ADP. This is Cytidylate kinase from Mycoplasma pneumoniae (strain ATCC 29342 / M129 / Subtype 1) (Mycoplasmoides pneumoniae).